The sequence spans 606 residues: Acetylcholinesterase (606 aa).

The first 28 residues, M1–A28, serve as a signal peptide directing secretion. A disulfide bridge connects residues C98 and C125. S231 functions as the Acyl-ester intermediate in the catalytic mechanism. C285 and C296 are disulfide-bonded. N289 is a glycosylation site (N-linked (GlcNAc...) asparagine). Catalysis depends on E358, which acts as the Charge relay system. Residue N374 is glycosylated (N-linked (GlcNAc...) asparagine). A disulfide bridge connects residues C433 and C552. Catalysis depends on H471, which acts as the Charge relay system. A glycan (N-linked (GlcNAc...) asparagine) is linked at N484.

The protein belongs to the type-B carboxylesterase/lipase family. As to quaternary structure, isoform S is monomeric. Isoform T can form oligomers, including collagen-tailed forms. In terms of processing, the N-terminus is blocked. As to expression, liver and muscle contain both isoform T and isoform S. Venom gland predominantly contains isoform S.

It is found in the synapse. Its subcellular location is the secreted. The protein localises to the cell membrane. It catalyses the reaction acetylcholine + H2O = choline + acetate + H(+). Its activity is regulated as follows. Inhibited by active site inhibitors: edrophonium, trimethyl-(m-acetamidopheny1)-ammonium iodide, and trimethyl-(p-acetarnidopheny1)-ammonium iodide. Inhibited by both active and peripheral site inhibitors: decamethonium, and BW284c51. Inhibited by peripheral site inhibitors: snake acetylcholinesterase fasciculin-2, propidium, gallamine, D-tubocurarine, and tacrine. Also inhibited by antibodies Elec410 and Fab410. In muscle, it terminates signal transduction at the neuromuscular junction by rapid hydrolysis of the acetylcholine released into the synaptic cleft. In liver, its function is unclear: it could serve as a safeguard against any diffusion of acetylcholine from synapses into the circulation. In venom, its toxic role is unclear: it could result in less musculatory control by rapidly hydrolyzing acetylcholine, or that it works synergistically with alkaline phosphatase (ALP) in paralyzing prey through hypotension. The chain is Acetylcholinesterase (ACHE) from Bungarus fasciatus (Banded krait).